The following is a 75-amino-acid chain: UPF0291 protein lmo1304 (75 aa).

The interval 56–75 is disordered; that stretch reads DPNGKDVTPHKVKQLRKNKY. Basic residues predominate over residues 65–75; the sequence is HKVKQLRKNKY.

It belongs to the UPF0291 family.

The protein localises to the cytoplasm. This Listeria monocytogenes serovar 1/2a (strain ATCC BAA-679 / EGD-e) protein is UPF0291 protein lmo1304.